The primary structure comprises 445 residues: Tubulin beta chain (445 aa).

Residues Q11, E69, S138, G142, T143, G144, N204, and N226 each coordinate GTP. Mg(2+) is bound at residue E69. The disordered stretch occupies residues 426–445; it reads QDATAEEEGEFEEEEGDVEA. A compositionally biased stretch (acidic residues) spans 429-445; that stretch reads TAEEEGEFEEEEGDVEA.

This sequence belongs to the tubulin family. Dimer of alpha and beta chains. A typical microtubule is a hollow water-filled tube with an outer diameter of 25 nm and an inner diameter of 15 nM. Alpha-beta heterodimers associate head-to-tail to form protofilaments running lengthwise along the microtubule wall with the beta-tubulin subunit facing the microtubule plus end conferring a structural polarity. Microtubules usually have 13 protofilaments but different protofilament numbers can be found in some organisms and specialized cells. Interacts with DCX/apicortin; the interaction stabilizes microtubule assembly. Mg(2+) is required as a cofactor.

Its subcellular location is the cytoplasm. It localises to the cytoskeleton. Tubulin is the major constituent of microtubules, a cylinder consisting of laterally associated linear protofilaments composed of alpha- and beta-tubulin heterodimers. Microtubules grow by the addition of GTP-tubulin dimers to the microtubule end, where a stabilizing cap forms. Below the cap, tubulin dimers are in GDP-bound state, owing to GTPase activity of alpha-tubulin. This chain is Tubulin beta chain, found in Plasmodium falciparum (isolate 3D7).